The primary structure comprises 146 residues: D-aminoacyl-tRNA deacylase (146 aa).

Positions 137 to 138 (GP) match the Gly-cisPro motif, important for rejection of L-amino acids motif.

Belongs to the DTD family. In terms of assembly, homodimer.

Its subcellular location is the cytoplasm. The enzyme catalyses glycyl-tRNA(Ala) + H2O = tRNA(Ala) + glycine + H(+). It catalyses the reaction a D-aminoacyl-tRNA + H2O = a tRNA + a D-alpha-amino acid + H(+). An aminoacyl-tRNA editing enzyme that deacylates mischarged D-aminoacyl-tRNAs. Also deacylates mischarged glycyl-tRNA(Ala), protecting cells against glycine mischarging by AlaRS. Acts via tRNA-based rather than protein-based catalysis; rejects L-amino acids rather than detecting D-amino acids in the active site. By recycling D-aminoacyl-tRNA to D-amino acids and free tRNA molecules, this enzyme counteracts the toxicity associated with the formation of D-aminoacyl-tRNA entities in vivo and helps enforce protein L-homochirality. The chain is D-aminoacyl-tRNA deacylase from Hahella chejuensis (strain KCTC 2396).